Here is a 141-residue protein sequence, read N- to C-terminus: MSRAHHQQGGAPSQRMLRVAELIRHTLSDLLSRSIVNDPVLEGHVITVPDVRMSPDLKLATAFVMPLGGKDINSVIEALDRHKKFLRSEIAQRIHLRFAPDIRFKADESFDYGDKIDALLASPQVRRDLDATHTETQKAAD.

The protein belongs to the RbfA family. In terms of assembly, monomer. Binds 30S ribosomal subunits, but not 50S ribosomal subunits or 70S ribosomes.

Its subcellular location is the cytoplasm. Functionally, one of several proteins that assist in the late maturation steps of the functional core of the 30S ribosomal subunit. Associates with free 30S ribosomal subunits (but not with 30S subunits that are part of 70S ribosomes or polysomes). Required for efficient processing of 16S rRNA. May interact with the 5'-terminal helix region of 16S rRNA. In Beijerinckia indica subsp. indica (strain ATCC 9039 / DSM 1715 / NCIMB 8712), this protein is Ribosome-binding factor A.